The following is a 515-amino-acid chain: Bifunctional purine biosynthesis protein PurH (515 aa).

In terms of domain architecture, MGS-like spans 1-145; sequence MTKRALISVS…KNHASVTVVV (145 aa).

Belongs to the PurH family.

It carries out the reaction (6R)-10-formyltetrahydrofolate + 5-amino-1-(5-phospho-beta-D-ribosyl)imidazole-4-carboxamide = 5-formamido-1-(5-phospho-D-ribosyl)imidazole-4-carboxamide + (6S)-5,6,7,8-tetrahydrofolate. It catalyses the reaction IMP + H2O = 5-formamido-1-(5-phospho-D-ribosyl)imidazole-4-carboxamide. The protein operates within purine metabolism; IMP biosynthesis via de novo pathway; 5-formamido-1-(5-phospho-D-ribosyl)imidazole-4-carboxamide from 5-amino-1-(5-phospho-D-ribosyl)imidazole-4-carboxamide (10-formyl THF route): step 1/1. Its pathway is purine metabolism; IMP biosynthesis via de novo pathway; IMP from 5-formamido-1-(5-phospho-D-ribosyl)imidazole-4-carboxamide: step 1/1. The protein is Bifunctional purine biosynthesis protein PurH of Streptococcus pyogenes serotype M12 (strain MGAS2096).